We begin with the raw amino-acid sequence, 382 residues long: Pregnancy-associated glycoprotein 1 (382 aa).

A signal peptide spans 1–15 (MKWLVLLGLVAFSEC). Positions 16–53 (IVKIPLRRVKTMRNTLSGKKMLNSFLKEHAYRLSQISF) are cleaved as a propeptide — activation peptide. Residues Asn57 and Asn74 are each glycosylated (N-linked (GlcNAc...) asparagine). Positions 71-379 (YVGNITIGTP…DRGNDRIGLA (309 aa)) constitute a Peptidase A1 domain. A disulfide bridge connects residues Cys102 and Cys110. N-linked (GlcNAc...) asparagine glycosylation occurs at Asn128. Intrachain disulfides connect Cys263–Cys267 and Cys305–Cys339.

This sequence belongs to the peptidase A1 family. In terms of tissue distribution, trophoblast and placental tissue. Produced specifically in the invasive binucleate cells of the placenta.

The protein localises to the secreted. It localises to the extracellular space. Has no proteolytic activity. In Ovis aries (Sheep), this protein is Pregnancy-associated glycoprotein 1.